Here is a 197-residue protein sequence, read N- to C-terminus: dTTP/UTP pyrophosphatase (197 aa).

Catalysis depends on Asp70, which acts as the Proton acceptor.

Belongs to the Maf family. YhdE subfamily. Homodimer. Can also form homotetramers. It depends on a divalent metal cation as a cofactor.

The protein resides in the cytoplasm. It catalyses the reaction dTTP + H2O = dTMP + diphosphate + H(+). The enzyme catalyses UTP + H2O = UMP + diphosphate + H(+). It carries out the reaction 5-methyl-UTP + H2O = 5-methyl-UMP + diphosphate + H(+). The catalysed reaction is psi-UTP + H2O = psi-UMP + diphosphate + H(+). It catalyses the reaction 5-methyl-CTP + H2O = 5-methyl-CMP + diphosphate + H(+). In terms of biological role, nucleoside triphosphate pyrophosphatase that hydrolyzes dTTP and UTP. Can also hydrolyze TTP and the modified nucleotides 5-methyl-UTP (m(5)UTP), pseudo-UTP and 5-methyl-CTP (m(5)CTP). Has weak activity with CTP. May have a dual role in cell division arrest and in preventing the incorporation of modified nucleotides into cellular nucleic acids. Important in maintenance of cell shape. This chain is dTTP/UTP pyrophosphatase (yhdE), found in Escherichia coli (strain K12).